The following is a 316-amino-acid chain: Glucan endo-1,3-beta-glucosidase GV (316 aa).

E99 functions as the Proton donor in the catalytic mechanism. Catalysis depends on E239, which acts as the Nucleophile.

The protein belongs to the glycosyl hydrolase 17 family.

Its subcellular location is the cytoplasm. The catalysed reaction is Hydrolysis of (1-&gt;3)-beta-D-glucosidic linkages in (1-&gt;3)-beta-D-glucans.. May provide a degree of protection against microbial invasion of germinated barley grain through its ability to degrade fungal cell wall polysaccharides. In Hordeum vulgare (Barley), this protein is Glucan endo-1,3-beta-glucosidase GV.